The chain runs to 862 residues: DNA mismatch repair protein MutS (862 aa).

613–620 (GPNMAGKS) lines the ATP pocket.

Belongs to the DNA mismatch repair MutS family.

Its function is as follows. This protein is involved in the repair of mismatches in DNA. It is possible that it carries out the mismatch recognition step. This protein has a weak ATPase activity. This is DNA mismatch repair protein MutS from Desulfitobacterium hafniense (strain Y51).